The following is a 454-amino-acid chain: Glutamyl-tRNA reductase (454 aa).

Residues 50–53 (TCNR), Ser-103, 108–110 (EDQ), and Gln-114 each bind substrate. The active-site Nucleophile is the Cys-51. 182–187 (GAGEMG) provides a ligand contact to NADP(+). Residues 407-454 (LFDPNFGGDTPQPDRPDDIPRAAERGDISGDDLPDDVPNHIAEKVSDG) are disordered. Basic and acidic residues-rich tracts occupy residues 418 to 434 (QPDR…RGDI) and 443 to 454 (VPNHIAEKVSDG).

It belongs to the glutamyl-tRNA reductase family. In terms of assembly, homodimer.

The enzyme catalyses (S)-4-amino-5-oxopentanoate + tRNA(Glu) + NADP(+) = L-glutamyl-tRNA(Glu) + NADPH + H(+). It functions in the pathway porphyrin-containing compound metabolism; protoporphyrin-IX biosynthesis; 5-aminolevulinate from L-glutamyl-tRNA(Glu): step 1/2. Functionally, catalyzes the NADPH-dependent reduction of glutamyl-tRNA(Glu) to glutamate 1-semialdehyde (GSA). In Haloquadratum walsbyi (strain DSM 16790 / HBSQ001), this protein is Glutamyl-tRNA reductase.